A 76-amino-acid chain; its full sequence is Amyloid protein A (76 aa).

This sequence belongs to the SAA family. Expressed by the liver; secreted in plasma.

The protein resides in the secreted. Major acute phase reactant. Apolipoprotein of the HDL complex. The sequence is that of Amyloid protein A (SAA1) from Macaca mulatta (Rhesus macaque).